The chain runs to 135 residues: Immunity protein RhsIA (135 aa).

The disordered stretch occupies residues 58-77; that stretch reads RKQGRQISLSCGEPPEYSPD.

Its function is as follows. Immunity component of a toxin-immunity protein module, which functions as a cellular contact-dependent growth inhibition (CDI) system. Specifically inhibits its cognate toxin RhsA. Cell contact is necessary for growth inhibition. The sequence is that of Immunity protein RhsIA (rhsIA) from Dickeya dadantii (strain 3937) (Erwinia chrysanthemi (strain 3937)).